Reading from the N-terminus, the 670-residue chain is DNA ligase (670 aa).

NAD(+)-binding positions include 32 to 36, 81 to 82, and E113; these read DAEYD and SL. The active-site N6-AMP-lysine intermediate is the K115. Residues R136, E173, K290, and K314 each coordinate NAD(+). Zn(2+) contacts are provided by C408, C411, C426, and C432. Positions 592-670 constitute a BRCT domain; that stretch reads EIDSPFAGKT…EAEMIRLLGE (79 aa).

Belongs to the NAD-dependent DNA ligase family. LigA subfamily. Requires Mg(2+) as cofactor. Mn(2+) is required as a cofactor.

The enzyme catalyses NAD(+) + (deoxyribonucleotide)n-3'-hydroxyl + 5'-phospho-(deoxyribonucleotide)m = (deoxyribonucleotide)n+m + AMP + beta-nicotinamide D-nucleotide.. DNA ligase that catalyzes the formation of phosphodiester linkages between 5'-phosphoryl and 3'-hydroxyl groups in double-stranded DNA using NAD as a coenzyme and as the energy source for the reaction. It is essential for DNA replication and repair of damaged DNA. In Yersinia pseudotuberculosis serotype IB (strain PB1/+), this protein is DNA ligase.